A 156-amino-acid polypeptide reads, in one-letter code: 6,7-dimethyl-8-ribityllumazine synthase (156 aa).

5-amino-6-(D-ribitylamino)uracil-binding positions include phenylalanine 23, 57–59, and 81–83; these read AYE and AVI. 86 to 87 contacts (2S)-2-hydroxy-3-oxobutyl phosphate; the sequence is ST. Histidine 89 serves as the catalytic Proton donor. Phenylalanine 114 serves as a coordination point for 5-amino-6-(D-ribitylamino)uracil. Arginine 128 is a (2S)-2-hydroxy-3-oxobutyl phosphate binding site.

Belongs to the DMRL synthase family.

It carries out the reaction (2S)-2-hydroxy-3-oxobutyl phosphate + 5-amino-6-(D-ribitylamino)uracil = 6,7-dimethyl-8-(1-D-ribityl)lumazine + phosphate + 2 H2O + H(+). It participates in cofactor biosynthesis; riboflavin biosynthesis; riboflavin from 2-hydroxy-3-oxobutyl phosphate and 5-amino-6-(D-ribitylamino)uracil: step 1/2. Its function is as follows. Catalyzes the formation of 6,7-dimethyl-8-ribityllumazine by condensation of 5-amino-6-(D-ribitylamino)uracil with 3,4-dihydroxy-2-butanone 4-phosphate. This is the penultimate step in the biosynthesis of riboflavin. This is 6,7-dimethyl-8-ribityllumazine synthase from Helicobacter hepaticus (strain ATCC 51449 / 3B1).